The sequence spans 140 residues: Nucleoside diphosphate kinase (140 aa).

ATP is bound by residues K11, F59, R87, T93, R104, and N114. The active-site Pros-phosphohistidine intermediate is H117.

This sequence belongs to the NDK family. In terms of assembly, homotetramer. Mg(2+) serves as cofactor.

It localises to the cytoplasm. It carries out the reaction a 2'-deoxyribonucleoside 5'-diphosphate + ATP = a 2'-deoxyribonucleoside 5'-triphosphate + ADP. The enzyme catalyses a ribonucleoside 5'-diphosphate + ATP = a ribonucleoside 5'-triphosphate + ADP. Major role in the synthesis of nucleoside triphosphates other than ATP. The ATP gamma phosphate is transferred to the NDP beta phosphate via a ping-pong mechanism, using a phosphorylated active-site intermediate. This is Nucleoside diphosphate kinase from Bradyrhizobium sp. (strain BTAi1 / ATCC BAA-1182).